A 2211-amino-acid polypeptide reads, in one-letter code: MFLACPGFWVLVVLGSSWAGWGNLGAEAAKLRQFYVAAQSIRWNYRPESTHLSSKPFETSFKKIVYREYEAYFQKEKPQSRTSGLLGPTLYAEVGDIMKVHFKNKAHKPLSIHAQGIKYSKFSEGASYSDHTLPMEKMDDAVAPGQEYTYEWIISEHSGPTHDDPPCLTHIYYSYVNLVEDFNSGLIGPLLICKKGTLTEDGTQKMFEKQHVLMFAVFDESKSWNQTSSLMYTVNGYVNGTMPDITVCAHDHISWHLIGMSSGPELFSIHFNGQVLEQNHHKISAITLVSATSTTANMTVSPEGRWTIASLIPRHFQAGMQAYIDIKNCAKKTRNPKKLTRDQRRHIKRWEYFIAAEEVIWDYAPIIPANMDKKYRSLHLDNFSNRIGKHYKKVVYKQYQDDSFTKRLEDPSSEGDGILGPIIRAQVRDTLKIVFKNMASRSYSIYPHGVTFSPYDNEVNSSSTSGSNTMIRAVRPGETYTYKWNILESDEPTENDAQCLTRPYYSNVDITRDLASGLIGLLLICKSRSLDRRGIQRAADIEQQAVFAVFDENKSWYIEDNIYKFCENPEKVKRDDPKFYESNIMSNFTLPAINGYVPESIPILGFCFDDTVQWHFCSVGTQNDILTIHFTGHSFIYGKRHEDTLTLFPMQGESVTVTMDNVGTWMLTTMNSNPRSKKLRLRFRDAKCIRNDDDDSYEIIYEPSGSTAMTTKKIHDSSEIEDENDADSDYQDELALILGLRSFRNSSLNQEKDELNLTALALEKDSEFIPPSANRSLDSNSSSRSHVSRLIAKNFAESLKTLLHLEAPAAGSPLEHAGLDKNSALNPPMAEHSSPYSEDPREDHPLSDVTGVSLLPFGTGFKNRKPAKHQRFQVGRGQAAKHKFSQTRFPAHKTRTRLSQDNSSSSRMGPWEDIPSDLLLLQQKDPYKILNGEWHLVSEKGSYEIIQDANENKTVNKLPNSPQNDSRTWGENIPFKNSHGKQSGHPTFLVTRRKPLQDRQDRRNSRLKEGLPLIRTRRKKKEEKPAYHVPLSPRSFHPLRGEVNASFSDRRHNHSLLLHASNETSLSIDLNQTFPSMNLSLAASLPDHDQTSPNDTTSQTSSPPDLYPTVSPEEHYQIFPIQDSDPTHSTTAPSNRSPDPTHSTTAPSNRSPPTQPSQIPNYDLRNRAIPTDVSQIFPSLELEVWQTATSLDLSQPSISPDLGQMALSPDPGQESLSPDLGQTSLSPDLSQESLSPDLGQTALSPDPSQESLSPDLGQTALSPDPSQESLSPDLGQTALSPDPGQESLSPDLGQTSLSPDLSQESLSPDLGQTALSPDPSQESLSPDLGQTALSPDPSQESLSPDLGQTSLSPDLGQESLSPDLGQTALSPDPSQESLSPDLGQTSLSPDLGQESLSPDLGQTALSPDLSQESLSPDLGQTPLSPDLSLESLSPDLSQLDLKQTSPPLDLNQTSHTSESSQSLPLPEFGQTFPNADIGQMPSPPPDSTLNNTFIPEEFNPLVVVGLSRDDGDYIEIIPRQKEESSEEDYGEFEFVAYNDPYQTDLRTDINSSRNPDNIAAWYLRSNTGNRKYYYIAAEEISWDYSKFVQSDDVDYVPEDTVYKKVVFRKYLDSTFTKLDPQGEYEEHLGILGPVIRAEVDDVIQVRFKNLASRPYSLHAHGLSYEKSSEGKTYEDDSPEWFKEDNAIQPNKTYTYVWHATTRSGPENPGSACRAWAYYSAVNPEKDIHSGLIGPLLICRKGTLDKETNMPVDMREFVLLFMVFDEKKSWYYDKKPTRSWRRASSEVKNSHEFHAINGMIYNLPGLRMYEQEWVRLHLLNLGGSRDIHVVHFHGQTLLENGTQQHQLGVWPLLPGSFKTLEMKASKPGWWLLDTEVGEIQRAGMQTPFLIVDRECKMPMGLSTGLIADSQIQASEFWGYWEPKLARLNNGGSYNAWIAEKLSTEFNPEPWIQVDMQKEVLLTGIQTQGAKHYLKPYYTTEFCVAYSLDRKNWRIFKGNSTRNVMYFGGNSDASTIKENQIDPPVVARYIRISPTGSYNKPALRLELQGCEVNGCSTPLGMESGKIENKQITASSFKKSWWGNYWEPFLARLNAQGRVNAWQAKANNNNQWLQIDLLKIKKITAIVTQGCKSLSSEMYVKSYTIHYSDQGTDWKPYREKSSMVDKIFEGNNNVRGHVKNFFNPPIISRFIRIIPKTWNQSIALRLELFGCDMY.

The N-terminal stretch at 1–28 (MFLACPGFWVLVVLGSSWAGWGNLGAEA) is a signal peptide. Plastocyanin-like domains lie at 30–193 (KLRQ…LLIC), 203–327 (TQKM…IDIK), 348–525 (KRWE…LLIC), and 535–686 (IQRA…FRDA). 2 consecutive F5/8 type A domains span residues 30–327 (KLRQ…IDIK) and 348–686 (KRWE…FRDA). The Ca(2+) site is built by aspartate 139 and aspartate 140. Cysteine 167 and cysteine 193 are oxidised to a cystine. N-linked (GlcNAc...) asparagine glycans are attached at residues asparagine 225, asparagine 239, asparagine 297, asparagine 382, and asparagine 460. Cysteine 248 and cysteine 329 form a disulfide bridge. Cysteines 499 and 525 form a disulfide. 2 N-linked (GlcNAc...) asparagine glycosylation sites follow: asparagine 553 and asparagine 587. Cysteines 607 and 688 form a disulfide. Threonine 644 is subject to Phosphothreonine. The b stretch occupies residues 696–1564 (SYEIIYEPSG…PDNIAAWYLR (869 aa)). Residues tyrosine 697, tyrosine 701, and tyrosine 730 each carry the sulfotyrosine modification. A propeptide spans 742–1564 (SFRNSSLNQE…PDNIAAWYLR (823 aa)) (activation peptide (connecting region)). N-linked (GlcNAc...) asparagine glycans are attached at residues asparagine 745, asparagine 756, asparagine 774, and asparagine 780. The interval 814-844 (LEHAGLDKNSALNPPMAEHSSPYSEDPREDH) is disordered. Residues asparagine 902, asparagine 952, and asparagine 964 are each glycosylated (N-linked (GlcNAc...) asparagine). Polar residues predominate over residues 954 to 969 (TVNKLPNSPQNDSRTW). The disordered stretch occupies residues 954–1039 (TVNKLPNSPQ…PLSPRSFHPL (86 aa)). The segment covering 995–1009 (PLQDRQDRRNSRLKE) has biased composition (basic and acidic residues). N-linked (GlcNAc...) asparagine glycans are attached at residues asparagine 1044, asparagine 1053, asparagine 1062, asparagine 1071, asparagine 1078, and asparagine 1094. 2 disordered regions span residues 1084-1162 (SLPD…IPNY) and 1195-1471 (QPSI…FGQT). Composition is skewed to polar residues over residues 1091-1103 (TSPN…TSSP) and 1127-1160 (THST…SQIP). 30 repeat units span residues 1124–1137 (SDPT…SNRS), 1138–1151 (PDPT…SNRS), 1188–1196 (ATSLDLSQP), 1197–1205 (SISPDLGQM), 1206–1214 (ALSPDPGQE), 1215–1223 (SLSPDLGQT), 1224–1232 (SLSPDLSQE), 1233–1241 (SLSPDLGQT), 1242–1250 (ALSPDPSQE), 1251–1259 (SLSPDLGQT), 1260–1268 (ALSPDPSQE), 1269–1277 (SLSPDLGQT), 1278–1286 (ALSPDPGQE), 1287–1295 (SLSPDLGQT), 1296–1304 (SLSPDLSQE), 1305–1313 (SLSPDLGQT), 1314–1322 (ALSPDPSQE), 1323–1331 (SLSPDLGQT), 1332–1340 (ALSPDPSQE), 1341–1349 (SLSPDLGQT), 1350–1358 (SLSPDLGQE), 1359–1367 (SLSPDLGQT), 1368–1376 (ALSPDPSQE), 1377–1385 (SLSPDLGQT), 1386–1394 (SLSPDLGQE), 1395–1403 (SLSPDLGQT), 1404–1412 (ALSPDLSQE), 1413–1421 (SLSPDLGQT), 1422–1430 (PLSPDLSLE), and 1431–1439 (SLSPDLSQL). The segment at 1124 to 1151 (SDPTHSTTAPSNRSPDPTHSTTAPSNRS) is 2 X 14 AA tandem repeats. A 30 X 9 AA approximate tandem repeats of [AS]-L-S-P-D-[LP]-[GS]-Q-[TE] region spans residues 1188–1453 (ATSLDLSQPS…TSPPLDLNQT (266 aa)). 8 stretches are compositionally biased toward polar residues: residues 1214–1234 (ESLS…QESL), 1241–1252 (TALSPDPSQESL), 1259–1270 (TALSPDPSQESL), 1286–1306 (ESLS…QESL), 1313–1324 (TALSPDPSQESL), 1331–1352 (TALS…TSLS), 1367–1388 (TALS…TSLS), and 1403–1414 (TALSPDLSQESL). Low complexity predominate over residues 1422–1441 (PLSPDLSLESLSPDLSQLDL). Residues 1440–1444 (DLKQT) form a 2-29; truncated repeat. A compositionally biased stretch (polar residues) spans 1442 to 1463 (KQTSPPLDLNQTSHTSESSQSL). The stretch at 1445–1453 (SPPLDLNQT) is one 2-30 repeat. 2 N-linked (GlcNAc...) asparagine glycosylation sites follow: asparagine 1451 and asparagine 1490. Residues tyrosine 1513, tyrosine 1529, tyrosine 1537, and tyrosine 1541 each carry the sulfotyrosine modification. Residues asparagine 1550 and asparagine 1690 are each glycosylated (N-linked (GlcNAc...) asparagine). Plastocyanin-like domains follow at residues 1569–1738 (NRKY…LLIC) and 1748–1890 (NMPV…FLIV). The 322-residue stretch at 1569-1890 (NRKYYYIAAE…AGMQTPFLIV (322 aa)) folds into the F5/8 type A 3 domain. Residues cysteine 1712 and cysteine 1738 are joined by a disulfide bond. Cu cation contacts are provided by histidine 1830 and histidine 1832. Asparagine 1839 carries an N-linked (GlcNAc...) asparagine glycan. Residue aspartate 1872 participates in Cu cation binding. Intrachain disulfides connect cysteine 1894-cysteine 2048 and cysteine 2053-cysteine 2208. 2 F5/8 type C domains span residues 1894–2048 (CKMP…LQGC) and 2053–2208 (CSTP…LFGC). Asparagine 1997 and asparagine 2196 each carry an N-linked (GlcNAc...) asparagine glycan.

This sequence belongs to the multicopper oxidase family. As to quaternary structure, factor Va, the activated form of factor V, is composed of a heavy chain and a light chain, non-covalently bound. The interaction between the two chains is calcium-dependent. Forms heterodimer with SERPINA5. Post-translationally, thrombin activates factor V proteolytically to the active cofactor, factor Va (formation of a heavy chain at the N-terminus and a light chain at the C-terminus). Sulfation is required for efficient thrombin cleavage and activation and for full procoagulant activity. In terms of processing, activated protein C inactivates factor V and factor Va by proteolytic degradation.

It localises to the secreted. With respect to regulation, inhibited by SERPINA5. Its function is as follows. Central regulator of hemostasis. It serves as a critical cofactor for the prothrombinase activity of factor Xa that results in the activation of prothrombin to thrombin. This chain is Coagulation factor V (F5), found in Bos taurus (Bovine).